The chain runs to 484 residues: Malonate-semialdehyde dehydrogenase 2 (484 aa).

The NAD(+) site is built by Phe-153, Lys-177, Glu-180, Arg-181, Ser-230, and Thr-252. The active-site Nucleophile is Cys-285. Glu-385 contributes to the NAD(+) binding site.

The protein belongs to the aldehyde dehydrogenase family. IolA subfamily. Homotetramer.

The enzyme catalyses 3-oxopropanoate + NAD(+) + CoA + H2O = hydrogencarbonate + acetyl-CoA + NADH + H(+). It carries out the reaction 2-methyl-3-oxopropanoate + NAD(+) + CoA + H2O = propanoyl-CoA + hydrogencarbonate + NADH + H(+). It participates in polyol metabolism; myo-inositol degradation into acetyl-CoA; acetyl-CoA from myo-inositol: step 7/7. Catalyzes the oxidation of malonate semialdehyde (MSA) and methylmalonate semialdehyde (MMSA) into acetyl-CoA and propanoyl-CoA, respectively. Is involved in a myo-inositol catabolic pathway. Bicarbonate, and not CO2, is the end-product of the enzymatic reaction. The chain is Malonate-semialdehyde dehydrogenase 2 from Geobacillus kaustophilus (strain HTA426).